The following is a 144-amino-acid chain: Putative sugar phosphate isomerase RBE_0278 (144 aa).

His-12 provides a ligand contact to substrate. Catalysis depends on His-101, which acts as the Proton donor. Arg-135 serves as a coordination point for substrate.

It belongs to the LacAB/RpiB family.

The sequence is that of Putative sugar phosphate isomerase RBE_0278 from Rickettsia bellii (strain RML369-C).